Reading from the N-terminus, the 135-residue chain is Aspartate 1-decarboxylase (135 aa).

Serine 25 serves as the catalytic Schiff-base intermediate with substrate; via pyruvic acid. Serine 25 carries the pyruvic acid (Ser) modification. A substrate-binding site is contributed by threonine 57. The Proton donor role is filled by tyrosine 58. 73–75 serves as a coordination point for substrate; it reads GSA.

The protein belongs to the PanD family. Heterooctamer of four alpha and four beta subunits. Pyruvate is required as a cofactor. Is synthesized initially as an inactive proenzyme, which is activated by self-cleavage at a specific serine bond to produce a beta-subunit with a hydroxyl group at its C-terminus and an alpha-subunit with a pyruvoyl group at its N-terminus.

It localises to the cytoplasm. It catalyses the reaction L-aspartate + H(+) = beta-alanine + CO2. The protein operates within cofactor biosynthesis; (R)-pantothenate biosynthesis; beta-alanine from L-aspartate: step 1/1. Catalyzes the pyruvoyl-dependent decarboxylation of aspartate to produce beta-alanine. In Albidiferax ferrireducens (strain ATCC BAA-621 / DSM 15236 / T118) (Rhodoferax ferrireducens), this protein is Aspartate 1-decarboxylase.